A 122-amino-acid chain; its full sequence is Short coiled-coil protein (122 aa).

The segment at 1 to 26 (MDGLNTGEEEDSAFTSISLTDDTDHS) is disordered. Positions 43–101 (NADMDAVDAENQVELEEKTRLINQVLELQHTLEDLSARVDAVKEENLKLKSENQVLGQY) form a coiled coil.

This sequence belongs to the SCOC family. As to quaternary structure, homodimer. Interacts with ARL1, ARL2 and ARL3. Directly interacts with FEZ1 and UVRAG. The interaction with UVRAG is reduced by amino acid starvation, but the complex is stabilized in the presence of FEZ1. Interacts with NRBF2.

It is found in the golgi apparatus membrane. The protein resides in the golgi apparatus. The protein localises to the trans-Golgi network. It localises to the cytoplasm. Its subcellular location is the cytosol. Functionally, positive regulator of amino acid starvation-induced autophagy. The protein is Short coiled-coil protein (Scoc) of Rattus norvegicus (Rat).